Reading from the N-terminus, the 165-residue chain is Large ribosomal subunit protein uL11 (165 aa).

It belongs to the universal ribosomal protein uL11 family. In terms of assembly, component of the large ribosomal subunit. Mature ribosomes consist of a small (40S) and a large (60S) subunit. The 40S subunit contains about 32 different proteins and 1 molecule of RNA (18S). The 60S subunit contains 45 different proteins and 3 molecules of RNA (25S, 5.8S and 5S).

The protein localises to the cytoplasm. Functionally, component of the ribosome, a large ribonucleoprotein complex responsible for the synthesis of proteins in the cell. The small ribosomal subunit (SSU) binds messenger RNAs (mRNAs) and translates the encoded message by selecting cognate aminoacyl-transfer RNA (tRNA) molecules. The large subunit (LSU) contains the ribosomal catalytic site termed the peptidyl transferase center (PTC), which catalyzes the formation of peptide bonds, thereby polymerizing the amino acids delivered by tRNAs into a polypeptide chain. The nascent polypeptides leave the ribosome through a tunnel in the LSU and interact with protein factors that function in enzymatic processing, targeting, and the membrane insertion of nascent chains at the exit of the ribosomal tunnel. The sequence is that of Large ribosomal subunit protein uL11 (RPL12) from Candida albicans (strain SC5314 / ATCC MYA-2876) (Yeast).